Consider the following 180-residue polypeptide: MINNAIARRYAKALVQLGSEKDLIDRFSQELKVVSGVFAGNAELRAAFGNPAFTADQKKQIMRDLIARMQCSELVANFLLLLVDKNRVVCLPEIVETYEKLADEQSGVIRPMITTAFALDDSQVNAIKGALEQKTGKKVVPQVKVDQSLIGGVVTQIGDIAYDSSVKTQLARIHDILQKG.

The protein belongs to the ATPase delta chain family. F-type ATPases have 2 components, F(1) - the catalytic core - and F(0) - the membrane proton channel. F(1) has five subunits: alpha(3), beta(3), gamma(1), delta(1), epsilon(1). F(0) has three main subunits: a(1), b(2) and c(10-14). The alpha and beta chains form an alternating ring which encloses part of the gamma chain. F(1) is attached to F(0) by a central stalk formed by the gamma and epsilon chains, while a peripheral stalk is formed by the delta and b chains.

The protein resides in the cell inner membrane. F(1)F(0) ATP synthase produces ATP from ADP in the presence of a proton or sodium gradient. F-type ATPases consist of two structural domains, F(1) containing the extramembraneous catalytic core and F(0) containing the membrane proton channel, linked together by a central stalk and a peripheral stalk. During catalysis, ATP synthesis in the catalytic domain of F(1) is coupled via a rotary mechanism of the central stalk subunits to proton translocation. In terms of biological role, this protein is part of the stalk that links CF(0) to CF(1). It either transmits conformational changes from CF(0) to CF(1) or is implicated in proton conduction. This Trichlorobacter lovleyi (strain ATCC BAA-1151 / DSM 17278 / SZ) (Geobacter lovleyi) protein is ATP synthase subunit delta.